Here is a 1987-residue protein sequence, read N- to C-terminus: Transcription factor 20 (1987 aa).

Residues 1-22 (MQSFREQSSYHGNQQSYPQEVH) show a composition bias toward polar residues. Disordered regions lie at residues 1 to 79 (MQSF…QGYQ), 96 to 432 (DTVA…GNVP), 446 to 481 (LSPT…DPGL), 502 to 816 (LLSD…GTAR), and 844 to 891 (PHWG…SLSE). The segment covering 51–74 (TGSSSSGRRGTAAAAAAMASETSG) has biased composition (low complexity). An Omega-N-methylarginine modification is found at arginine 59. Over residues 121-142 (QGSSFGNQYASEGHVSQFQAQH) the composition is skewed to polar residues. Over residues 163–205 (SAQYQQQASSQQQQQQQQQQQQQQQQQQQQVQQLRQQLYQSHQ) the composition is skewed to low complexity. Polar residues predominate over residues 206–235 (PLPQTTGQPASGSSHLQPMQRPSTLPSSAG). The span at 248–277 (QSSASSSSSSSFPSPQRFSQSGQSYDGSYS) shows a compositional bias: low complexity. Polar residues predominate over residues 289-311 (VGSNAQAYGTQSNYSYQPQSMKN). Lysine 316 participates in a covalent cross-link: Glycyl lysine isopeptide (Lys-Gly) (interchain with G-Cter in SUMO2). Over residues 322–354 (QQGQQQQQQQPQPQQQQPQQQQQQQQQQQHPPQ) the composition is skewed to low complexity. Polar residues predominate over residues 357–377 (MQYTNAATKMPLQSQVGQYNQ). Over residues 396–416 (SNPSPAASVVQSPSCSSTPSP) the composition is skewed to low complexity. The span at 417–432 (LMQSGENLQCGQGNVP) shows a compositional bias: polar residues. Positions 446-456 (LSPTPSMMPSP) are enriched in low complexity. 2 positions are modified to phosphoserine: serine 447 and serine 458. Polar residues-rich tracts occupy residues 526 to 537 (SCTNSEGSSQPE), 566 to 576 (LSGQSTSSDTT), and 585 to 605 (AGSS…TSPA). 4 positions are modified to phosphoserine: serine 567, serine 588, serine 603, and serine 612. Over residues 618 to 627 (TSLSSEGNTK) the composition is skewed to polar residues. Lysine 631 is subject to N6-acetyllysine. A compositionally biased stretch (basic and acidic residues) spans 645 to 657 (RVEKSGGQDKGSQ). Residues 666 to 682 (RPPSNSGVKEISHTSLP) show a composition bias toward polar residues. Serine 669 is subject to Phosphoserine. Positions 693-715 (GNKNGDNNSSNHNGEGNGPSSHS) are enriched in low complexity. The segment covering 722 to 731 (TGRTEPSKSP) has biased composition (polar residues). Residues lysine 739, lysine 762, lysine 777, lysine 852, lysine 861, and lysine 873 each participate in a glycyl lysine isopeptide (Lys-Gly) (interchain with G-Cter in SUMO2) cross-link. Residues 761–777 (EKGDFGSHGERKGRNEK) are compositionally biased toward basic and acidic residues. Serine 900 bears the Phosphoserine mark. Glycyl lysine isopeptide (Lys-Gly) (interchain with G-Cter in SUMO2) cross-links involve residues lysine 949 and lysine 951. A disordered region spans residues 949 to 1065 (KLKSQSGQIK…GDPHHMNPHM (117 aa)). A Glycyl lysine isopeptide (Lys-Gly) (interchain with G-Cter in SUMO1); alternate cross-link involves residue lysine 958. A Glycyl lysine isopeptide (Lys-Gly) (interchain with G-Cter in SUMO2); alternate cross-link involves residue lysine 958. The segment covering 974–989 (KSGDHCHPTSIKHETY) has biased composition (basic and acidic residues). A Glycyl lysine isopeptide (Lys-Gly) (interchain with G-Cter in SUMO2) cross-link involves residue lysine 985. 2 positions are modified to phosphoserine: serine 994 and serine 1033. Residue lysine 1043 forms a Glycyl lysine isopeptide (Lys-Gly) (interchain with G-Cter in SUMO2) linkage. Residue arginine 1052 is modified to Omega-N-methylarginine. Position 1081 is a phosphoserine (serine 1081). Glycyl lysine isopeptide (Lys-Gly) (interchain with G-Cter in SUMO2) cross-links involve residues lysine 1114, lysine 1126, lysine 1165, lysine 1201, lysine 1206, lysine 1211, lysine 1238, lysine 1259, lysine 1295, and lysine 1302. The interval 1136-1372 (VIAAAQHRQE…SPAKTKILPP (237 aa)) is disordered. Residues 1158–1170 (DRVRSPLKNDKDG) show a composition bias toward basic and acidic residues. The interval 1198–1219 (LPAKSMELKHSSQKLQESCWDL) is leucine-zipper. A Nuclear localization signal motif is present at residues 1282-1295 (RRRVRSFISPIPSK). 2 stretches are compositionally biased toward basic and acidic residues: residues 1305 to 1321 (NADD…EGAD) and 1332 to 1346 (HSQD…DSSK). Serine 1333 carries the post-translational modification Phosphoserine. Lysine 1337 participates in a covalent cross-link: Glycyl lysine isopeptide (Lys-Gly) (interchain with G-Cter in SUMO2). Position 1363 is a phosphoserine (serine 1363). A Glycyl lysine isopeptide (Lys-Gly) (interchain with G-Cter in SUMO2) cross-link involves residue lysine 1366. Residue serine 1389 is modified to Phosphoserine. The disordered stretch occupies residues 1415-1434 (SLKSGPPEGGTVATQEAEME). Glycyl lysine isopeptide (Lys-Gly) (interchain with G-Cter in SUMO2) cross-links involve residues lysine 1417, lysine 1437, lysine 1456, and lysine 1474. Residues 1446 to 1636 (SVTNQESNVE…KQAVPIVEPQ (191 aa)) form a disordered region. Over residues 1463-1479 (EEWRGSGDDKVKTEAHV) the composition is skewed to basic and acidic residues. The span at 1481–1501 (TASTGKEPSGTMTSTASQKPG) shows a compositional bias: polar residues. Lysine 1538 is covalently cross-linked (Glycyl lysine isopeptide (Lys-Gly) (interchain with G-Cter in SUMO2)). Serine 1550 is modified (phosphoserine). Lysine 1552 is covalently cross-linked (Glycyl lysine isopeptide (Lys-Gly) (interchain with G-Cter in SUMO2)). Residues 1565 to 1579 (GKKKGRPIGSVNKQK) constitute a DNA-binding region (a.T hook). Residues 1584-1594 (QPPPPPQPPQM) are compositionally biased toward pro residues. A Nuclear localization signal motif is present at residues 1604-1628 (KPKKQRQRRERRKPGAQPRKRKTKQ). Basic residues predominate over residues 1606–1627 (KKQRQRRERRKPGAQPRKRKTK). Residue lysine 1641 forms a Glycyl lysine isopeptide (Lys-Gly) (interchain with G-Cter in SUMO2) linkage. 2 disordered regions span residues 1685–1710 (QTKL…SKVL) and 1760–1865 (TLPK…GPEL). Serine 1697 is modified (phosphoserine). Threonine 1699, threonine 1790, and threonine 1792 each carry phosphothreonine. Residues 1812-1819 (RFKRRHRS) carry the Nuclear localization signal motif. Over residues 1850–1859 (DTKPSVPTTS) the composition is skewed to polar residues. The C2HC pre-PHD-type; degenerate zinc finger occupies 1856-1892 (PTTSEGGPELELQIPELPLDSNEFWVHEGCILWANGI). A PHD-type zinc finger spans residues 1912–1960 (MKCSHCQEAGATLGCYNKGCSFRYHYPCAIDADCLLHEENFSVRCPKHK). The disordered stretch occupies residues 1966 to 1987 (PLPPLQNKTAKGSLSTEQSERG). Over residues 1971–1987 (QNKTAKGSLSTEQSERG) the composition is skewed to polar residues.

As to quaternary structure, homodimer. Interacts with RNF4 and JUN. Binds to the regulatory region of MMP3. In terms of tissue distribution, expressed in brain, lung, liver, kidney and testes.

The protein localises to the nucleus. Its function is as follows. Transcriptional activator that binds to the regulatory region of MMP3 and thereby controls stromelysin expression. It stimulates the activity of various transcriptional activators such as JUN, SP1, PAX6 and ETS1, suggesting a function as a coactivator. This chain is Transcription factor 20 (Tcf20), found in Mus musculus (Mouse).